The following is a 90-amino-acid chain: UPF0237 protein BL1209.1 (90 aa).

Residues 5–79 (IITVVGQDTV…DDIGVRIRCQ (75 aa)) enclose the ACT domain.

Belongs to the UPF0237 family.

In Bifidobacterium longum (strain NCC 2705), this protein is UPF0237 protein BL1209.1.